The following is a 1171-amino-acid chain: MPANQRKQTSQSSYLQTPRNTATPSTQDAGKSVIAPKSSTSDSSETFLTMAQTTTKSNGQLPTPSANINGVPPTVNRKKQKRRAKQAARAAAEQAQGSQTNGGPSPGDVKKQMQELEARFRETGLDEQYDDDEQLDPAEDNAYYSDEEGDAYSGSYGHDGSSTNGYAMPTTNSSSKKQKKKKKSKSSQSDNSNYAHHGPNGSSHNHVSLPIPLQSPPNMQRGPGISKEKIWNTSSQEERERIKEFWLSLGEDERKSLVKVEKDAVLKKMKEQQKHSCSCTVCGRKRTAIEEELEVLYDAYYEELEQYANHQGGDGPPPMMPPPRRFGAMSGLQPPNRLPPVFTGQQPSRGRIVEQLGDDEDEEGDEEYSEDDADEDDYSDEEPEEIPRSHATDFFNFGNSLTVQGGILTVADDLLKNDGKKFIEMMEQLAERRMAREEDAKEQYANANYGHPPNGSMHPHSHGHLHNHPPPPEEDDYDDEEDDEDEYDSQEEDYDEEEMDSMTEEQRMEEGRRMFQIFAARMFEQRVLTAYKEKVAKERQQKLLEELEEESRADSLRKAKKAKDAQKKKEKLLEKKRALAEEKARKEAEKAAEEASLREIEEKKAEEQRLKREENRKKKEAQKKADEEERVRKEAEKQRRLQEQRERQAEQERKQREAKEREKKEKEELRRQALEAKEAKEKEAKERREKHEREKREKEAKVKADKEARELQKREEVAAQQAAVQAAQSAAQASRRPNQVPTPNLSHVLASPHISVAIPAVPKAPTPIKLRTNSQQENHSTIPRTPSGIPQSPFAGMQPMPGGLQPGMPMVPPGFGRPHHDPMFTHQQPIGNQFRPLPIPNGGMPQFQPGFNMHHMPQGRGFPMHGPPGFPQPSPNGMGSIGQLFGAPKEAPPSQAHSRNQSGSFDALSSTTQAQPIARPAPIGRPSSIVHGARHGDKSSNGEPDESSKHLGSSALLDDTDEPLKVGMGPRRSSAAPGNSSRQNFLPPPFGMDRSDPAGMMSSFGTWGAPPNPFGSSSLPGSNGFGGGWNTSLNMNNSFGMPPYFRPSQPRSVAVRLMICMACQNLQSSTPDGWLDIDSIKNEVALLNPPREEPVSERELLDICDTEGNQMNGGGTFEIRHSNGKSQIHYVSDPTPHDFRAVGAPGEIGSPISGNASRNPGPPGRAPIGGF.

Polar residues-rich tracts occupy residues 1–29 (MPAN…TQDA) and 37–68 (KSST…SANI). 6 disordered regions span residues 1–238 (MPAN…SQEE), 307–392 (YANH…SHAT), 433–510 (RMAR…RMEE), 545–739 (EELE…RPNQ), 863–996 (PMHG…DRSD), and 1139–1171 (FRAV…IGGF). Over residues 76–86 (NRKKQKRRAKQ) the composition is skewed to basic residues. A compositionally biased stretch (low complexity) spans 87–96 (AARAAAEQAQ). Over residues 108 to 124 (DVKKQMQELEARFRETG) the composition is skewed to basic and acidic residues. The span at 125 to 150 (LDEQYDDDEQLDPAEDNAYYSDEEGD) shows a compositional bias: acidic residues. Positions 160-172 (GSSTNGYAMPTTN) are enriched in polar residues. The segment covering 176-185 (KKQKKKKKSK) has biased composition (basic residues). Polar residues predominate over residues 190–206 (DNSNYAHHGPNGSSHNH). Over residues 226 to 238 (SKEKIWNTSSQEE) the composition is skewed to basic and acidic residues. The segment covering 315 to 324 (GPPPMMPPPR) has biased composition (pro residues). Residues 356–384 (LGDDEDEEGDEEYSEDDADEDDYSDEEPE) show a composition bias toward acidic residues. A compositionally biased stretch (basic and acidic residues) spans 433–442 (RMAREEDAKE). A compositionally biased stretch (acidic residues) spans 472-503 (PEEDDYDDEEDDEDEYDSQEEDYDEEEMDSMT). A coiled-coil region spans residues 474-733 (EDDYDDEEDD…VQAAQSAAQA (260 aa)). The segment covering 545–717 (EELEEESRAD…ARELQKREEV (173 aa)) has biased composition (basic and acidic residues). Residues 718–734 (AAQQAAVQAAQSAAQAS) are compositionally biased toward low complexity. Residues 865 to 874 (HGPPGFPQPS) are compositionally biased toward pro residues. Positions 895–915 (QAHSRNQSGSFDALSSTTQAQ) are enriched in polar residues.

It belongs to the NST1 family.

The protein localises to the cytoplasm. In terms of biological role, may act as a negative regulator of salt tolerance. The polypeptide is Stress response protein nst1 (nst1) (Sclerotinia sclerotiorum (strain ATCC 18683 / 1980 / Ss-1) (White mold)).